A 251-amino-acid polypeptide reads, in one-letter code: Large ribosomal subunit protein uL3 (251 aa).

Gln-151 carries the N5-methylglutamine modification. The tract at residues 221-251 (GLKQAANSNDSAAADTPAEVAAVEATEGQEG) is disordered. The segment covering 225–251 (AANSNDSAAADTPAEVAAVEATEGQEG) has biased composition (low complexity).

The protein belongs to the universal ribosomal protein uL3 family. As to quaternary structure, part of the 50S ribosomal subunit. Forms a cluster with proteins L14 and L19. Post-translationally, methylated by PrmB.

In terms of biological role, one of the primary rRNA binding proteins, it binds directly near the 3'-end of the 23S rRNA, where it nucleates assembly of the 50S subunit. The protein is Large ribosomal subunit protein uL3 of Novosphingobium aromaticivorans (strain ATCC 700278 / DSM 12444 / CCUG 56034 / CIP 105152 / NBRC 16084 / F199).